A 208-amino-acid polypeptide reads, in one-letter code: UPF0637 protein BCB4264_A4063 (208 aa).

The protein belongs to the UPF0637 family.

The sequence is that of UPF0637 protein BCB4264_A4063 from Bacillus cereus (strain B4264).